The sequence spans 92 residues: Small ribosomal subunit protein uS19 (92 aa).

Belongs to the universal ribosomal protein uS19 family.

Its function is as follows. Protein S19 forms a complex with S13 that binds strongly to the 16S ribosomal RNA. The protein is Small ribosomal subunit protein uS19 of Desulfatibacillum aliphaticivorans.